Here is a 438-residue protein sequence, read N- to C-terminus: sn-glycerol-3-phosphate-binding periplasmic protein UgpB (438 aa).

The signal sequence occupies residues M1–A23. Sn-glycerol 3-phosphate-binding residues include Y65, E89, S144, S270, G307, Y346, and R397.

It belongs to the bacterial solute-binding protein 1 family. The complex is composed of two ATP-binding proteins (UgpC), two transmembrane proteins (UgpA and UgpE) and a solute-binding protein (UgpB).

The protein localises to the periplasm. Part of the ABC transporter complex UgpBAEC involved in sn-glycerol-3-phosphate (G3P) import. Binds G3P. This is sn-glycerol-3-phosphate-binding periplasmic protein UgpB (ugpB) from Shigella flexneri.